A 671-amino-acid chain; its full sequence is DNA ligase (671 aa).

Residues 32 to 36, 81 to 82, and E113 each bind NAD(+); these read DAEYD and SL. The active-site N6-AMP-lysine intermediate is K115. Residues R136, E173, K290, and K314 each coordinate NAD(+). Zn(2+) contacts are provided by C408, C411, C426, and C432. Residues 593–671 form the BRCT domain; sequence EIDSPFAGKT…EAEMMRLLGE (79 aa).

The protein belongs to the NAD-dependent DNA ligase family. LigA subfamily. Mg(2+) is required as a cofactor. Requires Mn(2+) as cofactor.

It carries out the reaction NAD(+) + (deoxyribonucleotide)n-3'-hydroxyl + 5'-phospho-(deoxyribonucleotide)m = (deoxyribonucleotide)n+m + AMP + beta-nicotinamide D-nucleotide.. Its function is as follows. DNA ligase that catalyzes the formation of phosphodiester linkages between 5'-phosphoryl and 3'-hydroxyl groups in double-stranded DNA using NAD as a coenzyme and as the energy source for the reaction. It is essential for DNA replication and repair of damaged DNA. The chain is DNA ligase from Klebsiella pneumoniae subsp. pneumoniae (strain ATCC 700721 / MGH 78578).